The following is a 366-amino-acid chain: NADH-quinone oxidoreductase subunit D (366 aa).

It belongs to the complex I 49 kDa subunit family. As to quaternary structure, NDH-1 is composed of 14 different subunits. Subunits NuoB, C, D, E, F, and G constitute the peripheral sector of the complex.

The protein localises to the cell membrane. The enzyme catalyses a quinone + NADH + 5 H(+)(in) = a quinol + NAD(+) + 4 H(+)(out). In terms of biological role, NDH-1 shuttles electrons from NADH, via FMN and iron-sulfur (Fe-S) centers, to quinones in the respiratory chain. The immediate electron acceptor for the enzyme in this species is believed to be a menaquinone. Couples the redox reaction to proton translocation (for every two electrons transferred, four hydrogen ions are translocated across the cytoplasmic membrane), and thus conserves the redox energy in a proton gradient. This Bacillus thuringiensis (strain Al Hakam) protein is NADH-quinone oxidoreductase subunit D.